The primary structure comprises 480 residues: Nuclear receptor subfamily 6 group A member 1 (480 aa).

Positions 1 to 32 (MERDEPPPSGGGGGGGSAGFLEPPAALPPPPR) are disordered. A DNA-binding region (nuclear receptor) is located at residues 57–132 (QRTCLICGDR…MGMNRKAIRE (76 aa)). Zn(2+)-binding residues include cysteine 60, cysteine 63, cysteine 77, cysteine 80, cysteine 96, cysteine 102, cysteine 112, and cysteine 115. 2 consecutive NR C4-type zinc fingers follow at residues 60 to 80 (CLIC…CEGC) and 96 to 120 (CSRD…LLKC). Disordered stretches follow at residues 131–150 (REDG…QISE) and 162–199 (FEEE…LSSS). The span at 165–177 (EANHWSNHGDSDH) shows a compositional bias: basic and acidic residues. The segment at 172–253 (HGDSDHSSPG…RSLDPQSYSL (82 aa)) is sufficient for interaction with UIMC1. Residues 187-199 (SNQPSPGSTLSSS) are compositionally biased toward low complexity. Residues 249-480 (QSYSLIHQLL…HSCKTSVGKE (232 aa)) form the NR LBD domain.

This sequence belongs to the nuclear hormone receptor family. NR6 subfamily. As to quaternary structure, homodimer. Interacts with UIMC1. As to expression, shows highest expression in the germ cells of the adult testis.

It localises to the nucleus. In terms of biological role, orphan nuclear receptor that binds to a response element containing the sequence 5'-TCAAGGTCA-3'. Acts as a regulator of embryonic stem cell pluripotency by mediating repression of POU5F1/OCT4: binds to the DR0 element within the POU5F1/OCT4 promoter and inhibits POU5F1/OCT4 expression during embryonic stem cell differentiation. Involved in the regulation of gene expression in germ cell development during gametogenesis. The polypeptide is Nuclear receptor subfamily 6 group A member 1 (NR6A1) (Homo sapiens (Human)).